Here is a 467-residue protein sequence, read N- to C-terminus: Hydroxymethylglutaryl-CoA synthase erg13A (467 aa).

A35 serves as a coordination point for (3S)-3-hydroxy-3-methylglutaryl-CoA. The active-site Proton donor/acceptor is E86. 7 residues coordinate (3S)-3-hydroxy-3-methylglutaryl-CoA: C118, T160, S209, H259, K268, N334, and S368. C118 serves as the catalytic Acyl-thioester intermediate. The active-site Proton donor/acceptor is H259.

The protein belongs to the thiolase-like superfamily. HMG-CoA synthase family.

It carries out the reaction acetoacetyl-CoA + acetyl-CoA + H2O = (3S)-3-hydroxy-3-methylglutaryl-CoA + CoA + H(+). The protein operates within metabolic intermediate biosynthesis; (R)-mevalonate biosynthesis; (R)-mevalonate from acetyl-CoA: step 2/3. Functionally, hydroxymethylglutaryl-CoA synthase; part of the first module of ergosterol biosynthesis pathway that includes the early steps of the pathway, conserved across all eukaryotes, and which results in the formation of mevalonate from acetyl-coenzyme A (acetyl-CoA). Erg13A and erg13B condense acetyl-CoA with acetoacetyl-CoA to form hydroxymethylglutaryl-CoA (HMG-CoA). The first module starts with the action of the cytosolic acetyl-CoA acetyltransferase erg10B that catalyzes the formation of acetoacetyl-CoA. The hydroxymethylglutaryl-CoA synthases erg13A and erg13B then condense acetyl-CoA with acetoacetyl-CoA to form HMG-CoA. The rate-limiting step of the early module is the reduction to mevalonate by the 3-hydroxy-3-methylglutaryl-coenzyme A (HMG-CoA) reductases hmg1 and hmg2. Mevalonate is also a precursor for the extracellular siderophore triacetylfusarinine C (TAFC). The protein is Hydroxymethylglutaryl-CoA synthase erg13A of Aspergillus fumigatus (strain ATCC MYA-4609 / CBS 101355 / FGSC A1100 / Af293) (Neosartorya fumigata).